The chain runs to 289 residues: Oxaloacetate decarboxylase (289 aa).

Ser50 serves as a coordination point for substrate. Residue Asp88 participates in Mg(2+) binding. The substrate site is built by Arg159 and His235.

Belongs to the isocitrate lyase/PEP mutase superfamily. Oxaloacetate decarboxylase family. Homotetramer; dimer of dimers. The cofactor is Mg(2+).

The enzyme catalyses oxaloacetate + H(+) = pyruvate + CO2. Functionally, catalyzes the decarboxylation of oxaloacetate into pyruvate. Seems to play a role in maintaining cellular concentrations of bicarbonate and pyruvate. This is Oxaloacetate decarboxylase from Pseudomonas entomophila (strain L48).